The chain runs to 275 residues: Protein CIMAP1C (275 aa).

STPGR repeat units lie at residues 200–225 (PGPA…MAKR) and 236–261 (PGPG…MGIK).

Belongs to the CIMAP family.

This is Protein CIMAP1C (CIMAP1C) from Mus musculus (Mouse).